The following is a 224-amino-acid chain: MAFRNPMYQLSNVDDIDSEVLNSRFLSETKDDGFSRRRTTLAVCATKKDLYLYGTTPAGGAEWCSEVLERTRPRIAHKRQRRRHVPRWISDSFRTCLPSPSGKWKEQTANEGEGRVKSSWLAACDERIGIAEPTNYWHGIVRTEDDSSKTLYLIPETWEDVHLKEGFVAIIDLAAERLQCSKLILFVDKNLSALSYLVKSLHWVGFEPVPHLDCVDHVLFGMEL.

The protein belongs to the ODC antizyme family. In terms of assembly, interacts with ODC and thereby sterically blocks ODC homodimerization.

Ornithine decarboxylase (ODC) antizyme protein that negatively regulates ODC activity and intracellular polyamine biosynthesis in response to increased intracellular polyamine levels. Binds to ODC monomers, inhibiting the assembly of the functional ODC homodimer, and targets the monomers for ubiquitin-independent proteolytic destruction by the 26S proteasome. The polypeptide is Ornithine decarboxylase antizyme (spa1) (Schizosaccharomyces octosporus (Fission yeast)).